The primary structure comprises 638 residues: Acetolactate synthase 1, chloroplastic (638 aa).

The segment covering 1-19 (MATAAAASTALTGATTAAP) has biased composition (low complexity). The tract at residues 1-23 (MATAAAASTALTGATTAAPKARR) is disordered. The transit peptide at 1 to 39 (MATAAAASTALTGATTAAPKARRRAHLLATRRALAAPIR) directs the protein to the chloroplast. Glu-112 lines the thiamine diphosphate pocket. Residues Cys-132 and Cys-278 are joined by a disulfide bond. FAD contacts are provided by residues Arg-214, 320–341 (HGTV…LGVR), and 363–382 (DIDP…ICAD). The thiamine pyrophosphate binding stretch occupies residues 455–535 (QHQMWAAQYY…VKVFVLNNQH (81 aa)). Positions 506 and 533 each coordinate Mg(2+).

This sequence belongs to the TPP enzyme family. Requires Mg(2+) as cofactor. It depends on thiamine diphosphate as a cofactor.

It is found in the plastid. Its subcellular location is the chloroplast. The catalysed reaction is 2 pyruvate + H(+) = (2S)-2-acetolactate + CO2. It participates in amino-acid biosynthesis; L-isoleucine biosynthesis; L-isoleucine from 2-oxobutanoate: step 1/4. The protein operates within amino-acid biosynthesis; L-valine biosynthesis; L-valine from pyruvate: step 1/4. The protein is Acetolactate synthase 1, chloroplastic (ALS1) of Zea mays (Maize).